The sequence spans 232 residues: Mitochondrial import inner membrane translocase subunit Tim21 (232 aa).

The N-terminal 31 residues, 1 to 31 (MLPRFLWRPVLCSYRALGSPSRSLTVSYRNL), are a transit peptide targeting the mitochondrion. The chain crosses the membrane as a helical span at residues 96–116 (FTYFIVVLIGIGVTGGLFYVV).

This sequence belongs to the TIM21 family.

It localises to the mitochondrion membrane. May participate in the translocation of transit peptide-containing proteins across the mitochondrial inner membrane. The protein is Mitochondrial import inner membrane translocase subunit Tim21 (timm21) of Xenopus laevis (African clawed frog).